The sequence spans 219 residues: Guanylate kinase (219 aa).

Positions 15 to 194 (GLMFVLSSPS…AFAEVQSILK (180 aa)) constitute a Guanylate kinase-like domain. Residue 22–29 (SPSGAGKT) participates in ATP binding.

It belongs to the guanylate kinase family.

The protein localises to the cytoplasm. It carries out the reaction GMP + ATP = GDP + ADP. Its function is as follows. Essential for recycling GMP and indirectly, cGMP. The polypeptide is Guanylate kinase (Nitrobacter winogradskyi (strain ATCC 25391 / DSM 10237 / CIP 104748 / NCIMB 11846 / Nb-255)).